A 237-amino-acid polypeptide reads, in one-letter code: N-demethylindolmycin N-methyltransferase (237 aa).

The protein belongs to the methyltransferase superfamily.

The enzyme catalyses N-demethylindolmycin + S-adenosyl-L-methionine = indolmycin + S-adenosyl-L-homocysteine + H(+). Involved in the biosynthesis of the antibiotic indolmycin, an inhibitor of the bacterial tryptophan-tRNA synthetases. Catalyzes the methylation of N-demethylindolmycin to yield indolmycin, with S-adenosylmethionine (AdoMet) acting as the methyl donor. The polypeptide is N-demethylindolmycin N-methyltransferase (Streptomyces griseus).